A 219-amino-acid polypeptide reads, in one-letter code: N-(5'-phosphoribosyl)anthranilate isomerase (219 aa).

This sequence belongs to the TrpF family.

It catalyses the reaction N-(5-phospho-beta-D-ribosyl)anthranilate = 1-(2-carboxyphenylamino)-1-deoxy-D-ribulose 5-phosphate. Its pathway is amino-acid biosynthesis; L-tryptophan biosynthesis; L-tryptophan from chorismate: step 3/5. The protein is N-(5'-phosphoribosyl)anthranilate isomerase of Bradyrhizobium sp. (strain ORS 278).